The primary structure comprises 960 residues: Pentatricopeptide repeat-containing protein At3g63370, chloroplastic (960 aa).

The N-terminal 64 residues, methionine 1–leucine 64, are a transit peptide targeting the chloroplast. PPR repeat units lie at residues proline 79–threonine 109, leucine 115–arginine 145, threonine 146–leucine 180, glycine 181–serine 215, threonine 216–lysine 246, aspartate 248–proline 282, asparagine 283–serine 317, glutamate 319–alanine 349, aspartate 350–serine 384, aspartate 385–serine 419, asparagine 420–lysine 450, aspartate 451–isoleucine 485, aspartate 486–lysine 516, aspartate 520–lysine 550, aspartate 551–alanine 585, aspartate 586–leucine 620, glutamate 621–lysine 651, glycine 652–proline 686, aspartate 687–glutamate 717, and tryptophan 723–glutamate 753. Positions valine 758–aspartate 833 are type E motif. Positions glycine 834–glutamate 864 are type E(+) motif. The segment at arginine 865–tryptophan 960 is type DYW motif.

The protein belongs to the PPR family. PCMP-H subfamily.

The protein localises to the plastid. It localises to the chloroplast. Involved in RNA editing event in chloroplasts. Required for the editing of a single site in rps14 transcript. This Arabidopsis thaliana (Mouse-ear cress) protein is Pentatricopeptide repeat-containing protein At3g63370, chloroplastic (PCMP-H83).